The chain runs to 267 residues: MKAAVLTLAVLFLTGSQARHFWQQDEPPQSPWDRVKDLATVYVDVLKDSGRDYVSQFEGSALGKQLNLKLLDNWDSVTSTFSKLREQLGPVTQEFWDNLEKETEGLRQEMSKDLEEVKAKVQPYLDDFQKKWQEEMELYRQKVEPLRAELQEGARQKLHELQEKLSPLGEEMRDRARAHVDALRTHLAPYSDELRQRLAARLEALKENGGARLAEYHAKATEHLSTLSEKAKPALEDLRQGLLPVLESFKVSFLSALEEYTKKLNTQ.

A signal peptide spans 1–18 (MKAAVLTLAVLFLTGSQA). 2 tandem repeats follow at residues 68-89 (LKLL…EQLG) and 90-111 (PVTQ…QEMS). Residues 68 to 267 (LKLLDNWDSV…EEYTKKLNTQ (200 aa)) are 10 X approximate tandem repeats. At M110 the chain carries Methionine sulfoxide. Residues 112-122 (KDLEEVKAKVQ) form a 3; half-length repeat. A run of 5 repeats spans residues 123-144 (PYLD…QKVE), 145-166 (PLRA…EKLS), 167-188 (PLGE…THLA), 189-210 (PYSD…ENGG), and 211-232 (ARLA…EKAK). The residue at position 136 (M136) is a Methionine sulfoxide. Residues 233–243 (PALEDLRQGLL) form a 9; half-length repeat. Copy 10 of the repeat occupies 244-267 (PVLESFKVSFLSALEEYTKKLNTQ).

Belongs to the apolipoprotein A1/A4/E family. Homodimer. Interacts with APOA1BP and CLU. Component of a sperm activating protein complex (SPAP), consisting of APOA1, an immunoglobulin heavy chain, an immunoglobulin light chain and albumin. Interacts with NDRG1. Interacts with SCGB3A2. Interacts with NAXE and YJEFN3. Glycosylated. In terms of processing, palmitoylated. Post-translationally, phosphorylation sites are present in the extracellular medium. As to expression, major protein of plasma HDL, also found in chylomicrons.

Its subcellular location is the secreted. Functionally, participates in the reverse transport of cholesterol from tissues to the liver for excretion by promoting cholesterol efflux from tissues and by acting as a cofactor for the lecithin cholesterol acyltransferase (LCAT). As part of the SPAP complex, activates spermatozoa motility. In Pan troglodytes (Chimpanzee), this protein is Apolipoprotein A-I (APOA1).